The following is a 529-amino-acid chain: Bifunctional purine biosynthesis protein PurH (529 aa).

Positions 3-149 (DRIPLKRALI…KNHAFVTVVV (147 aa)) constitute an MGS-like domain.

The protein belongs to the PurH family.

It catalyses the reaction (6R)-10-formyltetrahydrofolate + 5-amino-1-(5-phospho-beta-D-ribosyl)imidazole-4-carboxamide = 5-formamido-1-(5-phospho-D-ribosyl)imidazole-4-carboxamide + (6S)-5,6,7,8-tetrahydrofolate. The catalysed reaction is IMP + H2O = 5-formamido-1-(5-phospho-D-ribosyl)imidazole-4-carboxamide. The protein operates within purine metabolism; IMP biosynthesis via de novo pathway; 5-formamido-1-(5-phospho-D-ribosyl)imidazole-4-carboxamide from 5-amino-1-(5-phospho-D-ribosyl)imidazole-4-carboxamide (10-formyl THF route): step 1/1. It functions in the pathway purine metabolism; IMP biosynthesis via de novo pathway; IMP from 5-formamido-1-(5-phospho-D-ribosyl)imidazole-4-carboxamide: step 1/1. This is Bifunctional purine biosynthesis protein PurH from Paracoccus denitrificans (strain Pd 1222).